Reading from the N-terminus, the 91-residue chain is Large ribosomal subunit protein bL27 (91 aa).

The span at 1–10 (MAQKKGGGST) shows a compositional bias: gly residues. The disordered stretch occupies residues 1-20 (MAQKKGGGSTRNGRDSQPKM).

It belongs to the bacterial ribosomal protein bL27 family.

The protein is Large ribosomal subunit protein bL27 of Verminephrobacter eiseniae (strain EF01-2).